We begin with the raw amino-acid sequence, 211 residues long: BAG family molecular chaperone regulator 2 (211 aa).

Ala-2 is subject to N-acetylalanine. Residues Ser-20, Ser-31, and Ser-73 each carry the phosphoserine modification. A coiled-coil region spans residues 20 to 61 (SMADRSSRLLESLDQLELRVEALREAATAVEQEKEILLEMIH). Positions 109-189 (SLKHATRIID…NIENSDKAIK (81 aa)) constitute a BAG domain.

In terms of assembly, binds to the ATPase domain of HSP/HSC70 chaperones. May interact with NWD1. Interacts with HSPA1A (via NBD), HSPA1B (via NBD) and HSPA8. May interact with DNJC9; the interaction seems to be histone-dependent.

Functionally, co-chaperone for HSP70 and HSC70 chaperone proteins. Acts as a nucleotide-exchange factor (NEF) promoting the release of ADP from the HSP70 and HSC70 proteins thereby triggering client/substrate protein release. The sequence is that of BAG family molecular chaperone regulator 2 (BAG2) from Homo sapiens (Human).